We begin with the raw amino-acid sequence, 279 residues long: MKNKVLLCINTLKSGASILGNDVKVYLETKYFVEVVLIDVGRPLFSFPKENFLFLITLGGDGTVLLAVNLLLENENIDIPIISINMGNVGFLADIKIEDFKKVIDRFFNNSLVINKKFLLHVTVSQHGKDLISKYALNDIIIRSSVLNKMIYVDLMVNSESFLSYKSDGIIVSTPTGSTGYSFSAGGPILEADLEGFXLTPISPHSVYNRSFVFSKLSKLSISFSKEYFIAAASIFLDGINFGSFGVDVVFEFKISSQSLNFVSFCTDTFVKRLKNKLL.

Asp61 serves as the catalytic Proton acceptor. NAD(+) contacts are provided by residues 61 to 62 (DG), 138 to 139 (ND), Lys149, Lys166, Asp168, and 179 to 184 (TGYSFS).

The protein belongs to the NAD kinase family. The cofactor is a divalent metal cation.

It localises to the cytoplasm. It carries out the reaction NAD(+) + ATP = ADP + NADP(+) + H(+). Its function is as follows. Involved in the regulation of the intracellular balance of NAD and NADP, and is a key enzyme in the biosynthesis of NADP. Catalyzes specifically the phosphorylation on 2'-hydroxyl of the adenosine moiety of NAD to yield NADP. This is NAD kinase from Borreliella burgdorferi (strain ATCC 35210 / DSM 4680 / CIP 102532 / B31) (Borrelia burgdorferi).